Here is a 417-residue protein sequence, read N- to C-terminus: Histidine--tRNA ligase (417 aa).

It belongs to the class-II aminoacyl-tRNA synthetase family. Homodimer.

Its subcellular location is the cytoplasm. It catalyses the reaction tRNA(His) + L-histidine + ATP = L-histidyl-tRNA(His) + AMP + diphosphate + H(+). This is Histidine--tRNA ligase from Nitratidesulfovibrio vulgaris (strain DP4) (Desulfovibrio vulgaris).